A 301-amino-acid chain; its full sequence is ATP synthase gamma chain (301 aa).

It belongs to the ATPase gamma chain family. In terms of assembly, F-type ATPases have 2 components, CF(1) - the catalytic core - and CF(0) - the membrane proton channel. CF(1) has five subunits: alpha(3), beta(3), gamma(1), delta(1), epsilon(1). CF(0) has three main subunits: a, b and c.

Its subcellular location is the cell inner membrane. Produces ATP from ADP in the presence of a proton gradient across the membrane. The gamma chain is believed to be important in regulating ATPase activity and the flow of protons through the CF(0) complex. The polypeptide is ATP synthase gamma chain (Helicobacter pylori (strain P12)).